Here is a 359-residue protein sequence, read N- to C-terminus: 3-dehydroquinate synthase (359 aa).

Residues 70-75 (DGEQYK), 105-109 (GVIGD), 129-130 (TT), lysine 142, lysine 151, and 169-172 (FYKT) contribute to the NAD(+) site. Glutamate 184, histidine 247, and histidine 264 together coordinate Zn(2+).

The protein belongs to the sugar phosphate cyclases superfamily. Dehydroquinate synthase family. It depends on Co(2+) as a cofactor. Zn(2+) serves as cofactor. NAD(+) is required as a cofactor.

Its subcellular location is the cytoplasm. It carries out the reaction 7-phospho-2-dehydro-3-deoxy-D-arabino-heptonate = 3-dehydroquinate + phosphate. The protein operates within metabolic intermediate biosynthesis; chorismate biosynthesis; chorismate from D-erythrose 4-phosphate and phosphoenolpyruvate: step 2/7. Functionally, catalyzes the conversion of 3-deoxy-D-arabino-heptulosonate 7-phosphate (DAHP) to dehydroquinate (DHQ). In Francisella tularensis subsp. holarctica (strain OSU18), this protein is 3-dehydroquinate synthase.